The chain runs to 564 residues: Septation ring formation regulator EzrA (564 aa).

At 1 to 4 (MVLY) the chain is on the extracellular side. A helical membrane pass occupies residues 5–23 (IILAIIVIILIAVGVLFYL). At 24-564 (RSNKRQIIEK…KHIEEEVIKQ (541 aa)) the chain is on the cytoplasmic side. 5 coiled-coil regions span residues 99 to 138 (SFNASQSEIDDANELMDSYEQSYQQQLEDVNEIIALYKDN), 190 to 223 (DGNYVQAHNHIAALNEQMKQLRSYMEEIPELIRE), 271 to 300 (LISRLELEEANDKLANINDKLDDMYDLIEH), 350 to 435 (VRQF…RRLL), and 471 to 550 (VKQL…ESVE).

Belongs to the EzrA family.

The protein localises to the cell membrane. Its function is as follows. Negative regulator of FtsZ ring formation; modulates the frequency and position of FtsZ ring formation. Inhibits FtsZ ring formation at polar sites. Interacts either with FtsZ or with one of its binding partners to promote depolymerization. The sequence is that of Septation ring formation regulator EzrA from Staphylococcus aureus (strain JH1).